A 157-amino-acid chain; its full sequence is Transcriptional regulator AzlB (157 aa).

In terms of domain architecture, HTH asnC-type spans 5 to 66; the sequence is LDETDKAILR…IVDEKKLGIE (62 aa). A DNA-binding region (H-T-H motif) is located at residues 24-43; sequence NLNLSKKIGLSPSACLARTK.

Its function is as follows. Transcriptional repressor of the azlBCD operon involved in branched-chain amino acid transport. This Bacillus subtilis (strain 168) protein is Transcriptional regulator AzlB (azlB).